The following is a 182-amino-acid chain: Bifunctional protein PyrR (182 aa).

A PRPP-binding motif is present at residues 99-111 (VVLVDDVLFTGRT).

The protein belongs to the purine/pyrimidine phosphoribosyltransferase family. PyrR subfamily.

It catalyses the reaction UMP + diphosphate = 5-phospho-alpha-D-ribose 1-diphosphate + uracil. Its function is as follows. Regulates the transcription of the pyrimidine nucleotide (pyr) operon in response to exogenous pyrimidines. In terms of biological role, also displays a weak uracil phosphoribosyltransferase activity which is not physiologically significant. The polypeptide is Bifunctional protein PyrR (Chloroflexus aurantiacus (strain ATCC 29366 / DSM 635 / J-10-fl)).